The chain runs to 168 residues: NADH dehydrogenase [ubiquinone] 1 alpha subcomplex assembly factor 2 (168 aa).

A compositionally biased stretch (basic and acidic residues) spans 108–118; the sequence is KEKLLQEESNK. The disordered stretch occupies residues 108-168; the sequence is KEKLLQEESN…MPHGDKGHSQ (61 aa). A Phosphoserine modification is found at Ser133. Positions 144-155 are enriched in polar residues; sequence ESPTSTGKTFQP.

It belongs to the complex I NDUFA12 subunit family. Interacts with ARMC9.

It is found in the mitochondrion. Acts as a molecular chaperone for mitochondrial complex I assembly. Complex I functions in the transfer of electrons from NADH to the respiratory chain. The immediate electron acceptor for the enzyme is believed to be ubiquinone. Is involved in the initial steps of cilia formation, including removal of CP110 from the mother centrioles, docking of membrane vesicles to the mother centrioles, and establishment of the transition zone. The chain is NADH dehydrogenase [ubiquinone] 1 alpha subcomplex assembly factor 2 (NDUFAF2) from Bos taurus (Bovine).